The sequence spans 283 residues: 1-deoxypentalenic acid 11-beta-hydroxylase (283 aa).

Residue R117 coordinates substrate. The Fe cation site is built by H135 and D137. 2-oxoglutarate-binding positions include 135–137 (HQD) and W151. Position 186 (R186) interacts with substrate. Fe cation is bound at residue H224. 2 residues coordinate 2-oxoglutarate: S226 and R238. The tract at residues 251–283 (HRGFNALTPWPESAKDASKGIMSKITGTPTTAE) is disordered.

The protein belongs to the PhyH family. Fe cation is required as a cofactor. Requires L-ascorbate as cofactor.

It carries out the reaction 1-deoxypentalenate + 2-oxoglutarate + O2 = 1-deoxy-11beta-hydroxypentalenate + succinate + CO2. The protein operates within antibiotic biosynthesis; pentalenolactone biosynthesis. In terms of biological role, catalyzes the conversion of 1-deoxypentalenic acid to 11-beta-hydroxy-1-deoxypentalenic acid in the biosynthesis of pentalenolactone antibiotic. The polypeptide is 1-deoxypentalenic acid 11-beta-hydroxylase (pntH) (Streptomyces arenae).